Consider the following 220-residue polypeptide: Peptidyl-tRNA hydrolase (220 aa).

Tyrosine 14 lines the tRNA pocket. Histidine 19 (proton acceptor) is an active-site residue. TRNA-binding residues include phenylalanine 66, asparagine 68, and asparagine 114. The interval 184 to 220 (QAFNSTDLRPRPEPVPAPQPADVSGPQETGPAERPEV) is disordered.

Belongs to the PTH family. Monomer.

The protein resides in the cytoplasm. The enzyme catalyses an N-acyl-L-alpha-aminoacyl-tRNA + H2O = an N-acyl-L-amino acid + a tRNA + H(+). Hydrolyzes ribosome-free peptidyl-tRNAs (with 1 or more amino acids incorporated), which drop off the ribosome during protein synthesis, or as a result of ribosome stalling. Functionally, catalyzes the release of premature peptidyl moieties from peptidyl-tRNA molecules trapped in stalled 50S ribosomal subunits, and thus maintains levels of free tRNAs and 50S ribosomes. The chain is Peptidyl-tRNA hydrolase from Deinococcus deserti (strain DSM 17065 / CIP 109153 / LMG 22923 / VCD115).